The chain runs to 254 residues: uncharacterized protein (254 aa).

Helical transmembrane passes span 41–61 (LFVFLFFLFATTISFTQIKII), 64–84 (ILQAPAVGIKFLQLAPGEYFF), 91–111 (IYCGIVATTPFAVYQVILYIL), 125–145 (LLISSVLLFITGGIFAYFVLA), 146–166 (PAALTFLISYGSDIVEPLWSF), 172–192 (FILLLLLSTGLAFEIPIIQLL), 204–224 (MIRAWRYIIIIATIAGAILTP), and 232–252 (LIMSSAVLLLYFGGIVILLVL).

It belongs to the TatC family.

It localises to the plastid. The protein resides in the chloroplast membrane. This is an uncharacterized protein from Pyropia yezoensis (Susabi-nori).